Reading from the N-terminus, the 130-residue chain is Small ribosomal subunit protein uS9 (130 aa).

Belongs to the universal ribosomal protein uS9 family.

The protein is Small ribosomal subunit protein uS9 of Buchnera aphidicola subsp. Acyrthosiphon pisum (strain 5A).